The sequence spans 31 residues: Elongation factor Tu (31 aa).

It belongs to the GTP-binding elongation factor family. EF-Tu/EF-1A subfamily. In terms of assembly, monomer.

It is found in the cytoplasm. Its function is as follows. This protein promotes the GTP-dependent binding of aminoacyl-tRNA to the A-site of ribosomes during protein biosynthesis. This Streptomyces laurentii protein is Elongation factor Tu (tuf).